The following is a 111-amino-acid chain: uncharacterized protein (111 aa).

It localises to the mitochondrion. This is an uncharacterized protein from Arabidopsis thaliana (Mouse-ear cress).